The following is an 86-amino-acid chain: MTASEGRVRSVTGRVVSNKMDRTIVVAIERQVSHPLYGKYIRRTTKVLAHDENNECSIGDLVTLHASRPISKKKAWTLGAIVERAV.

It belongs to the universal ribosomal protein uS17 family. As to quaternary structure, part of the 30S ribosomal subunit.

In terms of biological role, one of the primary rRNA binding proteins, it binds specifically to the 5'-end of 16S ribosomal RNA. The polypeptide is Small ribosomal subunit protein uS17 (Methylococcus capsulatus (strain ATCC 33009 / NCIMB 11132 / Bath)).